Consider the following 365-residue polypeptide: HLA class I histocompatibility antigen, A alpha chain (365 aa).

The first 24 residues, 1–24, serve as a signal peptide directing secretion; it reads MAVMAPRTLLLLLSGALALTQTWA. Positions 3–11 are VL9 epitope; the sequence is VMAPRTLLL. The alpha-1 stretch occupies residues 25–114; it reads GSHSMRYFFT…LRGYYNQSEA (90 aa). Over 25–308 the chain is Extracellular; the sequence is GSHSMRYFFT…ELSSQPTIPI (284 aa). Tyr31 provides a ligand contact to a peptide antigen. Residue Tyr83 is modified to Sulfotyrosine. 2 residues coordinate a peptide antigen: Thr97 and Tyr108. Residue Asn110 is glycosylated (N-linked (GlcNAc...) asparagine). The interval 115–206 is alpha-2; sequence GSHTIQIMYG…ENGKETLQRT (92 aa). Residues Cys125 and Cys188 are joined by a disulfide bond. 5 residues coordinate a peptide antigen: Asp140, Thr167, Lys170, Tyr183, and Tyr195. The interval 207–298 is alpha-3; the sequence is DPPKTHMTHH…GLPKPLTLRW (92 aa). The Ig-like C1-type domain occupies 209 to 295; it reads PKTHMTHHPI…QHEGLPKPLT (87 aa). Cys227 and Cys283 are oxidised to a cystine. Positions 299 to 308 are connecting peptide; sequence ELSSQPTIPI. The helical transmembrane segment at 309-332 threads the bilayer; that stretch reads VGIIAGLVLLGAVITGAVVAAVMW. Residues 333-365 are Cytoplasmic-facing; sequence RRKSSDRKGGSYTQAASSDSAQGSDVSLTACKV. Residues 339–365 form a disordered region; that stretch reads RKGGSYTQAASSDSAQGSDVSLTACKV. Ser343 is modified (phosphoserine). Residue Tyr344 is modified to Phosphotyrosine. The span at 346-359 shows a compositional bias: low complexity; it reads QAASSDSAQGSDVS. Residues Ser349, Ser350, Ser352, Ser356, and Ser359 each carry the phosphoserine modification.

The protein belongs to the MHC class I family. In terms of assembly, heterotrimer that consists of an alpha chain HLA-A, a beta chain B2M and a peptide (peptide-HLA-A-B2M). Early in biogenesis, HLA-A-B2M dimer interacts with the components of the peptide-loading complex composed of TAPBP, TAP1-TAP2, TAPBPL, PDIA3/ERP57 and CALR. Interacts with TAP1-TAP2 transporter via TAPBP; this interaction is obligatory for the loading of peptide epitopes delivered to the ER by TAP1-TAP2 transporter. Interacts with TAPBPL; TAPBPL binds peptide-free HLA-A-B2M complexes or those loaded with low affinity peptides, likely facilitating peptide exchange for higher affinity peptides. Only optimally assembled peptide-HLA-B2M trimer translocates to the surface of antigen-presenting cells, where it interacts with TCR and CD8 coreceptor on the surface of T cells. HLA-A (via polymorphic alpha-1 and alpha-2 domains) interacts with antigen-specific TCR (via CDR3 domains). One HLA-A molecule (mainly via nonpolymorphic alpha-3 domain) interacts with one CD8A homodimer (via CDR-like loop); this interaction ensures peptide-HLA-A-B2M recognition by CD8-positive T cells only. Alleles A*23:01; A*24:02 and A*32:01 interact (via Bw4 motif) with KIR3DL1 on NK cells; this interaction is direct. As to quaternary structure, (Microbial infection) Interacts with HHV-8 MIR1 protein. (Microbial infection) Interacts with HTLV-1 accessory protein p12I. In terms of processing, (Microbial infection) Polyubiquitinated in a post ER compartment by interaction with human herpesvirus 8 MIR1 protein. This targets the protein for rapid degradation via the ubiquitin system. Post-translationally, N-linked glycosylation at Asn-110. Ubiquitous.

It is found in the cell membrane. It localises to the endoplasmic reticulum membrane. In terms of biological role, antigen-presenting major histocompatibility complex class I (MHCI) molecule. In complex with B2M/beta 2 microglobulin displays primarily viral and tumor-derived peptides on antigen-presenting cells for recognition by alpha-beta T cell receptor (TCR) on HLA-A-restricted CD8-positive T cells, guiding antigen-specific T cell immune response to eliminate infected or transformed cells. May also present self-peptides derived from the signal sequence of secreted or membrane proteins, although T cells specific for these peptides are usually inactivated to prevent autoreactivity. Both the peptide and the MHC molecule are recognized by TCR, the peptide is responsible for the fine specificity of antigen recognition and MHC residues account for the MHC restriction of T cells. Typically presents intracellular peptide antigens of 8 to 13 amino acids that arise from cytosolic proteolysis via IFNG-induced immunoproteasome or via endopeptidase IDE/insulin-degrading enzyme. Can bind different peptides containing allele-specific binding motifs, which are mainly defined by anchor residues at position 2 and 9. Its function is as follows. Allele A*01:01: Presents a restricted peptide repertoire including viral epitopes derived from IAV NP/nucleoprotein (CTELKLSDY), IAV PB1/polymerase basic protein 1 (VSDGGPNLY), HAdV-11 capsid L3/hexon protein (LTDLGQNLLY), SARS-CoV-2 3a/ORF3a (FTSDYYQLY) as well as tumor peptide antigens including MAGE1 (EADPTGHSY), MAGEA3 (EVDPIGHLY) and WT1 (TSEKRPFMCAY), all having in common a canonical motif with a negatively charged Asp or Glu residue at position 3 and a Tyr anchor residue at the C-terminus. A number of HLA-A*01:01-restricted peptides carry a post-translational modification with oxidation and N-terminal acetylation being the most frequent. Fails to present highly immunogenic peptides from the EBV latent antigens. Functionally, allele A*02:01: A major allele in human populations, presents immunodominant viral epitopes derived from IAV M/matrix protein 1 (GILGFVFTL), HIV-1 env (TLTSCNTSV), HIV-1 gag-pol (ILKEPVHGV), HTLV-1 Tax (LLFGYPVYV), HBV C/core antigen (FLPSDFFPS), HCMV UL83/pp65 (NLVPMVATV) as well as tumor peptide antigens including MAGEA4 (GVYDGREHTV), WT1 (RMFPNAPYL) and CTAG1A/NY-ESO-1 (SLLMWITQC), all having in common hydrophobic amino acids at position 2 and at the C-terminal anchors. Allele A*03:01: Presents viral epitopes derived from IAV NP (ILRGSVAHK), HIV-1 nef (QVPLRPMTYK), HIV-1 gag-pol (AIFQSSMTK), SARS-CoV-2 N/nucleoprotein (KTFPPTEPK) as well as tumor peptide antigens including PMEL (LIYRRRLMK), NODAL (HAYIQSLLK), TRP-2 (RMYNMVPFF), all having in common hydrophobic amino acids at position 2 and Lys or Arg anchor residues at the C-terminus. May also display spliced peptides resulting from the ligation of two separate proteasomal cleavage products that are not contiguous in the parental protein. In terms of biological role, allele A*11:01: Presents several immunodominant epitopes derived from HIV-1 gag-pol and HHV-4 EBNA4, containing the peptide motif with Val, Ile, Thr, Leu, Tyr or Phe at position 2 and Lys anchor residue at the C-terminus. Important in the control of HIV-1, EBV and HBV infections. Presents an immunodominant epitope derived from SARS-CoV-2 N/nucleoprotein (KTFPPTEPK). Its function is as follows. Allele A*23:01: Interacts with natural killer (NK) cell receptor KIR3DL1 and may contribute to functional maturation of NK cells and self-nonself discrimination during innate immune response. Functionally, allele A*24:02: Presents viral epitopes derived from HIV-1 nef (RYPLTFGWCF), EBV lytic- and latent-cycle antigens BRLF1 (TYPVLEEMF), BMLF1 (DYNFVKQLF) and LMP2 (IYVLVMLVL), SARS-CoV nucleocapsid/N (QFKDNVILL), as well as tumor peptide antigens including PRAME (LYVDSLFFL), all sharing a common signature motif, namely an aromatic residue Tyr or Phe at position 2 and a nonhydrophobic anchor residue Phe, Leu or Iso at the C-terminus. Interacts with natural killer (NK) cell receptor KIR3DL1 and may contribute to functional maturation of NK cells and self-nonself discrimination during innate immune response. Allele A*26:01: Presents several epitopes derived from HIV-1 gag-pol (EVIPMFSAL, ETKLGKAGY) and env (LVSDGGPNLY), carrying as anchor residues preferentially Glu at position 1, Val or Thr at position 2 and Tyr at the C-terminus. In terms of biological role, allele A*29:02: Presents peptides having a common motif, namely a Glu residue at position 2 and Tyr or Leu anchor residues at the C-terminus. Its function is as follows. Allele A*32:01: Interacts with natural killer (NK) cell receptor KIR3DL1 and may contribute to functional maturation of NK cells and self-nonself discrimination during innate immune response. Functionally, allele A*68:01: Presents viral epitopes derived from IAV NP (KTGGPIYKR) and HIV-1 tat (ITKGLGISYGR), having a common signature motif namely, Val or Thr at position 2 and positively charged residues Arg or Lys at the C-terminal anchor. Allele A*74:01: Presents immunodominant HIV-1 epitopes derived from gag-pol (GQMVHQAISPR, QIYPGIKVR) and rev (RQIHSISER), carrying an aliphatic residue at position 2 and Arg anchor residue at the C-terminus. May contribute to viral load control in chronic HIV-1 infection. The protein is HLA class I histocompatibility antigen, A alpha chain of Homo sapiens (Human).